The chain runs to 144 residues: High mobility group B protein 2 (144 aa).

Composition is skewed to basic and acidic residues over residues Met1–Ser12 and Ala73–Lys94. Disordered stretches follow at residues Met1–Ala42, Lys57–Lys94, and Tyr106–Asp144. A DNA-binding region (HMG box) is located at residues Pro38–Asn107. A Phosphoserine modification is found at Ser125. Over residues Val127 to Asp144 the composition is skewed to acidic residues.

This sequence belongs to the HMGB family. Mostly expressed in cotyledons, hypocotyls, leaves, and flowers (excluding pedicels), also present in roots and stems.

Its subcellular location is the nucleus. It localises to the cytoplasm. The protein localises to the cytosol. In terms of biological role, binds preferentially double-stranded DNA. Confers sensitivity to salt and drought stresses. The protein is High mobility group B protein 2 (HMGB2) of Arabidopsis thaliana (Mouse-ear cress).